Consider the following 87-residue polypeptide: Beta-toxin Ct17 (87 aa).

Residues 1–19 form the signal peptide; the sequence is MNSLLMITACLVLIGTVWA. In terms of domain architecture, LCN-type CS-alpha/beta spans 20–85; the sequence is KKDGYLVDKT…TWPLPNKRCG (66 aa). Cystine bridges form between Cys-31–Cys-84, Cys-35–Cys-60, Cys-44–Cys-65, and Cys-48–Cys-67. A Cysteine amide modification is found at Cys-84.

The protein belongs to the long (4 C-C) scorpion toxin superfamily. Sodium channel inhibitor family. Beta subfamily. As to expression, expressed by the venom gland.

The protein resides in the secreted. Its function is as follows. Beta toxins bind voltage-independently at site-4 of sodium channels (Nav) and shift the voltage of activation toward more negative potentials thereby affecting sodium channel activation and promoting spontaneous and repetitive firing. Is possibly lethal to mice, freshwater shrimp and crickets. The protein is Beta-toxin Ct17 of Centruroides tecomanus (Scorpion).